The chain runs to 413 residues: Aspartate aminotransferase, cytoplasmic (413 aa).

Residues glycine 39, tryptophan 141, and asparagine 195 each contribute to the L-aspartate site. Lysine 259 carries the post-translational modification N6-(pyridoxal phosphate)lysine. Arginine 387 contributes to the L-aspartate binding site.

Belongs to the class-I pyridoxal-phosphate-dependent aminotransferase family. Homodimer. Pyridoxal 5'-phosphate is required as a cofactor.

The protein resides in the cytoplasm. It catalyses the reaction L-aspartate + 2-oxoglutarate = oxaloacetate + L-glutamate. It carries out the reaction L-cysteine + 2-oxoglutarate = 2-oxo-3-sulfanylpropanoate + L-glutamate. The enzyme catalyses (2S)-2-aminobutanoate + 2-oxoglutarate = 2-oxobutanoate + L-glutamate. The catalysed reaction is 3-sulfino-L-alanine + 2-oxoglutarate = 3-sulfinopyruvate + L-glutamate. Biosynthesis of L-glutamate from L-aspartate or L-cysteine. Important regulator of levels of glutamate, the major excitatory neurotransmitter of the vertebrate central nervous system. Acts as a scavenger of glutamate in brain neuroprotection. The aspartate aminotransferase activity is involved in hepatic glucose synthesis during development and in adipocyte glyceroneogenesis. Using L-cysteine as substrate, regulates levels of mercaptopyruvate, an important source of hydrogen sulfide. Mercaptopyruvate is converted into H(2)S via the action of 3-mercaptopyruvate sulfurtransferase (3MST). Hydrogen sulfide is an important synaptic modulator and neuroprotectant in the brain. This is Aspartate aminotransferase, cytoplasmic from Bos taurus (Bovine).